The primary structure comprises 185 residues: Ribosome-recycling factor (185 aa).

The disordered stretch occupies residues 139–159 (IDSLEKDGDVSGDEADRAKKK). Positions 141–159 (SLEKDGDVSGDEADRAKKK) are enriched in basic and acidic residues.

It belongs to the RRF family.

The protein localises to the cytoplasm. Its function is as follows. Responsible for the release of ribosomes from messenger RNA at the termination of protein biosynthesis. May increase the efficiency of translation by recycling ribosomes from one round of translation to another. This Sorangium cellulosum (strain So ce56) (Polyangium cellulosum (strain So ce56)) protein is Ribosome-recycling factor.